The chain runs to 240 residues: Nudix hydrolase 3 (240 aa).

Residues 50 to 190 form the Nudix hydrolase domain; sequence NSAMSVLIPL…RMKYTLPSFD (141 aa). The Nudix box signature appears at 89 to 110; it reads GRMDPGETTTETALRETFEEIG. Mg(2+) is bound by residues glutamate 104 and glutamate 108.

The protein belongs to the Nudix hydrolase family. PCD1 subfamily. Mn(2+) is required as a cofactor. Mg(2+) serves as cofactor.

Probably mediates the hydrolysis of some nucleoside diphosphate derivatives. This is Nudix hydrolase 3 (ndx-3) from Caenorhabditis elegans.